A 398-amino-acid chain; its full sequence is Succinate--CoA ligase [ADP-forming] subunit beta (398 aa).

In terms of domain architecture, ATP-grasp spans 9–253 (KELLKSYGVA…EAEEDPKELE (245 aa)). ATP is bound by residues K46, 53–55 (GRG), E108, C111, and E116. Residues N208 and D222 each contribute to the Mg(2+) site. Substrate is bound by residues N273 and 330-332 (GIM).

The protein belongs to the succinate/malate CoA ligase beta subunit family. In terms of assembly, heterotetramer of two alpha and two beta subunits. The cofactor is Mg(2+).

The catalysed reaction is succinate + ATP + CoA = succinyl-CoA + ADP + phosphate. It catalyses the reaction GTP + succinate + CoA = succinyl-CoA + GDP + phosphate. It participates in carbohydrate metabolism; tricarboxylic acid cycle; succinate from succinyl-CoA (ligase route): step 1/1. In terms of biological role, succinyl-CoA synthetase functions in the citric acid cycle (TCA), coupling the hydrolysis of succinyl-CoA to the synthesis of either ATP or GTP and thus represents the only step of substrate-level phosphorylation in the TCA. The beta subunit provides nucleotide specificity of the enzyme and binds the substrate succinate, while the binding sites for coenzyme A and phosphate are found in the alpha subunit. This chain is Succinate--CoA ligase [ADP-forming] subunit beta, found in Acidiphilium cryptum (strain JF-5).